We begin with the raw amino-acid sequence, 161 residues long: Endoribonuclease YbeY (161 aa).

Zn(2+) is bound by residues His-127, His-131, and His-137.

The protein belongs to the endoribonuclease YbeY family. Requires Zn(2+) as cofactor.

It is found in the cytoplasm. Its function is as follows. Single strand-specific metallo-endoribonuclease involved in late-stage 70S ribosome quality control and in maturation of the 3' terminus of the 16S rRNA. The chain is Endoribonuclease YbeY from Listeria monocytogenes serotype 4a (strain HCC23).